Reading from the N-terminus, the 833-residue chain is DNA ligase (833 aa).

NAD(+) is bound by residues D35–D39, S84–L85, and E115. K117 serves as the catalytic N6-AMP-lysine intermediate. NAD(+) is bound by residues R138, E175, K292, and K316. Residues C410, C413, C428, and C434 each coordinate Zn(2+). Residues L750–P833 enclose the BRCT domain.

The protein belongs to the NAD-dependent DNA ligase family. LigA subfamily. Mg(2+) serves as cofactor. Mn(2+) is required as a cofactor.

It carries out the reaction NAD(+) + (deoxyribonucleotide)n-3'-hydroxyl + 5'-phospho-(deoxyribonucleotide)m = (deoxyribonucleotide)n+m + AMP + beta-nicotinamide D-nucleotide.. Its function is as follows. DNA ligase that catalyzes the formation of phosphodiester linkages between 5'-phosphoryl and 3'-hydroxyl groups in double-stranded DNA using NAD as a coenzyme and as the energy source for the reaction. It is essential for DNA replication and repair of damaged DNA. The polypeptide is DNA ligase (Xanthomonas euvesicatoria pv. vesicatoria (strain 85-10) (Xanthomonas campestris pv. vesicatoria)).